The sequence spans 501 residues: MLGRDIESDWIGNYWGRDHSLALNTFSKMSIEKEGVLYQKDFFVPYDGLVEELPEHSIEIPEIMGQDLLNDRLNSVEDVQSSYYGRLMPGLNIDLSMPTFPVSNELPVRLSSPIQMNLSTSMPNPTIEQLHSKTKSYVSQNPVNMVGSLSGSPPTDCHSPGGNSNTCGTLKTRALSLSPVSSDTAAKKKSPSRSGSSSSGIKRPLNSFMLYRRDKQSSIPTNNHQSISRIIGEMWKRETIEEKERYAEMAQRERERHAKEYPDYKFLPRKKKDRSTSGKSPRRRKTFDPSLEQDESKVLRMMLNQISHKKSQSDAEKFKLDQYSWLLSEEGNYDSQKGAFDIICQANTNSSQTGLPHSNQPSEISFIPGIYTAPNSVPLPIFPVKNKVEKVDTHNSLDGYLHTFDNLSDYEFRSLINNHSTPSVNDSRLGTSFNKSCTDSPQSISIYDDIKNLDIFSEKKETPNVSLVPTFDSTIFQDDSAYGYDNFTGIWDDPSYRLPVF.

The span at 142 to 153 (PVNMVGSLSGSP) shows a compositional bias: polar residues. Disordered regions lie at residues 142-205 (PVNM…KRPL) and 246-293 (YAEM…SLEQ). Over residues 192–204 (SRSGSSSSGIKRP) the composition is skewed to low complexity. A DNA-binding region (HMG box) is located at residues 201–265 (IKRPLNSFML…RHAKEYPDYK (65 aa)). Residues 246–263 (YAEMAQRERERHAKEYPD) show a composition bias toward basic and acidic residues.

In terms of processing, phosphorylated by MAPK2.

Its subcellular location is the nucleus. In Pneumocystis carinii, this protein is HMG-box protein STE11.